Here is a 246-residue protein sequence, read N- to C-terminus: Pyridoxine 5'-phosphate synthase (246 aa).

Asn-6 lines the 3-amino-2-oxopropyl phosphate pocket. 8 to 9 is a 1-deoxy-D-xylulose 5-phosphate binding site; it reads DH. Residue Arg-17 participates in 3-amino-2-oxopropyl phosphate binding. Residue His-49 is the Proton acceptor of the active site. Residues Arg-51 and His-56 each coordinate 1-deoxy-D-xylulose 5-phosphate. Glu-76 serves as the catalytic Proton acceptor. Thr-106 contacts 1-deoxy-D-xylulose 5-phosphate. His-196 serves as the catalytic Proton donor. 3-amino-2-oxopropyl phosphate contacts are provided by residues Gly-197 and 219–220; that span reads GH.

Belongs to the PNP synthase family. As to quaternary structure, homooctamer; tetramer of dimers.

The protein resides in the cytoplasm. The catalysed reaction is 3-amino-2-oxopropyl phosphate + 1-deoxy-D-xylulose 5-phosphate = pyridoxine 5'-phosphate + phosphate + 2 H2O + H(+). It participates in cofactor biosynthesis; pyridoxine 5'-phosphate biosynthesis; pyridoxine 5'-phosphate from D-erythrose 4-phosphate: step 5/5. Its function is as follows. Catalyzes the complicated ring closure reaction between the two acyclic compounds 1-deoxy-D-xylulose-5-phosphate (DXP) and 3-amino-2-oxopropyl phosphate (1-amino-acetone-3-phosphate or AAP) to form pyridoxine 5'-phosphate (PNP) and inorganic phosphate. In Akkermansia muciniphila (strain ATCC BAA-835 / DSM 22959 / JCM 33894 / BCRC 81048 / CCUG 64013 / CIP 107961 / Muc), this protein is Pyridoxine 5'-phosphate synthase.